A 263-amino-acid chain; its full sequence is Trans-2-decenoyl-[acyl-carrier-protein] isomerase (263 aa).

The protein belongs to the enoyl-CoA hydratase/isomerase family. In terms of assembly, homotetramer.

The enzyme catalyses (2E)-decenoyl-[ACP] = (3Z)-decenoyl-[ACP]. It functions in the pathway lipid metabolism; fatty acid biosynthesis. Its function is as follows. Catalyzes the isomerization of trans-2-decenoyl-ACP to cis-3-decenoyl-ACP. Required for survival at low pH. The polypeptide is Trans-2-decenoyl-[acyl-carrier-protein] isomerase (fabM) (Streptococcus mutans serotype c (strain ATCC 700610 / UA159)).